The chain runs to 181 residues: ATP synthase subunit delta (181 aa).

The protein belongs to the ATPase delta chain family. As to quaternary structure, F-type ATPases have 2 components, F(1) - the catalytic core - and F(0) - the membrane proton channel. F(1) has five subunits: alpha(3), beta(3), gamma(1), delta(1), epsilon(1). F(0) has three main subunits: a(1), b(2) and c(10-14). The alpha and beta chains form an alternating ring which encloses part of the gamma chain. F(1) is attached to F(0) by a central stalk formed by the gamma and epsilon chains, while a peripheral stalk is formed by the delta and b chains.

It is found in the cell membrane. Functionally, f(1)F(0) ATP synthase produces ATP from ADP in the presence of a proton or sodium gradient. F-type ATPases consist of two structural domains, F(1) containing the extramembraneous catalytic core and F(0) containing the membrane proton channel, linked together by a central stalk and a peripheral stalk. During catalysis, ATP synthesis in the catalytic domain of F(1) is coupled via a rotary mechanism of the central stalk subunits to proton translocation. In terms of biological role, this protein is part of the stalk that links CF(0) to CF(1). It either transmits conformational changes from CF(0) to CF(1) or is implicated in proton conduction. The protein is ATP synthase subunit delta of Bacillus pumilus (strain SAFR-032).